Consider the following 558-residue polypeptide: Ubiquitin carboxyl-terminal hydrolase 30 homolog (558 aa).

A helical transmembrane segment spans residues I6–P26. The USP domain maps to A39–G550. The active-site Nucleophile is C48. The segment at L267–S300 is disordered. A compositionally biased stretch (low complexity) spans P280–Q289. The active-site Proton acceptor is H506.

The protein belongs to the peptidase C19 family.

Its subcellular location is the mitochondrion outer membrane. The catalysed reaction is Thiol-dependent hydrolysis of ester, thioester, amide, peptide and isopeptide bonds formed by the C-terminal Gly of ubiquitin (a 76-residue protein attached to proteins as an intracellular targeting signal).. Deubiquitinating enzyme that acts as a key inhibitor of mitophagy by counteracting the action of parkin (park). The chain is Ubiquitin carboxyl-terminal hydrolase 30 homolog from Drosophila melanogaster (Fruit fly).